A 188-amino-acid polypeptide reads, in one-letter code: Ribose 1,5-bisphosphate phosphokinase PhnN (188 aa).

An ATP-binding site is contributed by 9–16 (GPSGAGKD).

This sequence belongs to the ribose 1,5-bisphosphokinase family.

It carries out the reaction alpha-D-ribose 1,5-bisphosphate + ATP = 5-phospho-alpha-D-ribose 1-diphosphate + ADP. It functions in the pathway metabolic intermediate biosynthesis; 5-phospho-alpha-D-ribose 1-diphosphate biosynthesis; 5-phospho-alpha-D-ribose 1-diphosphate from D-ribose 5-phosphate (route II): step 3/3. Catalyzes the phosphorylation of ribose 1,5-bisphosphate to 5-phospho-D-ribosyl alpha-1-diphosphate (PRPP). In Pectobacterium parmentieri (strain WPP163) (Pectobacterium wasabiae (strain WPP163)), this protein is Ribose 1,5-bisphosphate phosphokinase PhnN.